Here is a 432-residue protein sequence, read N- to C-terminus: Anaerobic glycerol-3-phosphate dehydrogenase subunit B (432 aa).

The protein belongs to the anaerobic G-3-P dehydrogenase subunit B family. In terms of assembly, composed of a catalytic GlpA/B dimer and of membrane bound GlpC. The cofactor is FMN.

It carries out the reaction a quinone + sn-glycerol 3-phosphate = dihydroxyacetone phosphate + a quinol. It functions in the pathway polyol metabolism; glycerol degradation via glycerol kinase pathway; glycerone phosphate from sn-glycerol 3-phosphate (anaerobic route): step 1/1. Its function is as follows. Conversion of glycerol 3-phosphate to dihydroxyacetone. Uses fumarate or nitrate as electron acceptor. The sequence is that of Anaerobic glycerol-3-phosphate dehydrogenase subunit B from Haemophilus influenzae (strain PittGG).